The following is a 141-amino-acid chain: Hemoglobin subunit alpha (141 aa).

Residues Val-1–Arg-141 enclose the Globin domain. Phosphoserine is present on Ser-3. Position 7 is an N6-succinyllysine (Lys-7). A Phosphothreonine modification is found at Thr-8. At Lys-11 the chain carries N6-succinyllysine. Lys-16 is subject to N6-acetyllysine; alternate. Residue Lys-16 is modified to N6-succinyllysine; alternate. At Ser-35 the chain carries Phosphoserine. An N6-succinyllysine modification is found at Lys-40. An O2-binding site is contributed by His-58. His-87 provides a ligand contact to heme b. Ser-102 carries the post-translational modification Phosphoserine. Residue Thr-108 is modified to Phosphothreonine. Residues Ser-124 and Ser-131 each carry the phosphoserine modification. Residues Thr-134 and Thr-137 each carry the phosphothreonine modification. Ser-138 carries the post-translational modification Phosphoserine.

This sequence belongs to the globin family. Heterotetramer of two alpha chains and two beta chains. As to expression, red blood cells.

Functionally, involved in oxygen transport from the lung to the various peripheral tissues. In terms of biological role, hemopressin acts as an antagonist peptide of the cannabinoid receptor CNR1. Hemopressin-binding efficiently blocks cannabinoid receptor CNR1 and subsequent signaling. The sequence is that of Hemoglobin subunit alpha (HBA) from Physeter macrocephalus (Sperm whale).